Consider the following 127-residue polypeptide: Holo-[acyl-carrier-protein] synthase (127 aa).

Residues Asp-9 and Glu-58 each coordinate Mg(2+).

The protein belongs to the P-Pant transferase superfamily. AcpS family. Mg(2+) serves as cofactor.

Its subcellular location is the cytoplasm. It catalyses the reaction apo-[ACP] + CoA = holo-[ACP] + adenosine 3',5'-bisphosphate + H(+). In terms of biological role, transfers the 4'-phosphopantetheine moiety from coenzyme A to a Ser of acyl-carrier-protein. The polypeptide is Holo-[acyl-carrier-protein] synthase (Shewanella baltica (strain OS185)).